Here is a 134-residue protein sequence, read N- to C-terminus: ATP synthase epsilon chain (134 aa).

Belongs to the ATPase epsilon chain family. As to quaternary structure, F-type ATPases have 2 components, CF(1) - the catalytic core - and CF(0) - the membrane proton channel. CF(1) has five subunits: alpha(3), beta(3), gamma(1), delta(1), epsilon(1). CF(0) has three main subunits: a, b and c.

The protein localises to the cell inner membrane. Produces ATP from ADP in the presence of a proton gradient across the membrane. This Syntrophobacter fumaroxidans (strain DSM 10017 / MPOB) protein is ATP synthase epsilon chain.